The following is a 500-amino-acid chain: Probable cytosol aminopeptidase (500 aa).

Positions 265 and 270 each coordinate Mn(2+). K277 is an active-site residue. Residues D288, D347, and E349 each coordinate Mn(2+). R351 is a catalytic residue.

This sequence belongs to the peptidase M17 family. Mn(2+) serves as cofactor.

The protein resides in the cytoplasm. It catalyses the reaction Release of an N-terminal amino acid, Xaa-|-Yaa-, in which Xaa is preferably Leu, but may be other amino acids including Pro although not Arg or Lys, and Yaa may be Pro. Amino acid amides and methyl esters are also readily hydrolyzed, but rates on arylamides are exceedingly low.. The enzyme catalyses Release of an N-terminal amino acid, preferentially leucine, but not glutamic or aspartic acids.. Its function is as follows. Presumably involved in the processing and regular turnover of intracellular proteins. Catalyzes the removal of unsubstituted N-terminal amino acids from various peptides. The protein is Probable cytosol aminopeptidase of Bdellovibrio bacteriovorus (strain ATCC 15356 / DSM 50701 / NCIMB 9529 / HD100).